We begin with the raw amino-acid sequence, 314 residues long: MSDLPFTLDQLKIIKTIHREGSFKTAAKKLYISQPAVSRQVQNLERQLNTPIFYRDKRKARLTETGHILVKYAEQILSLCEETCQALDELKSINSGTLVIGASQTTGTYLMPRLIGIFRHKYPQISIELKVHSTRRISWGVANGEIDLAIVGGEVPPELQGTLEIISYAEDELALIIPQAHPFATLQSIQKEDLYRLRFIALDTQSTIRSVIENTLTQSGIDSRYFKIEMELNSIEAIKNAVQSGLGAAFVSVSAISKELELGILHWAKIEDVTIKRTLSILINPKRYYANPIKNFEKEIMEILLTSAASTNNP.

An HTH lysR-type domain is found at 6–63; that stretch reads FTLDQLKIIKTIHREGSFKTAAKKLYISQPAVSRQVQNLERQLNTPIFYRDKRKARLT. Residues 23 to 42 constitute a DNA-binding region (H-T-H motif); it reads FKTAAKKLYISQPAVSRQVQ.

It belongs to the LysR transcriptional regulatory family.

The protein localises to the plastid. It is found in the chloroplast. Functionally, trans-acting transcriptional regulator of RuBisCO genes (rbcL and rbcS) expression. In Emiliania huxleyi (Coccolithophore), this protein is Probable RuBisCO transcriptional regulator (rbcR).